The sequence spans 157 residues: Transcription elongation factor GreA (157 aa).

A coiled-coil region spans residues 9 to 30; sequence LEGAQQLKEELKRRKTTDRKRI.

It belongs to the GreA/GreB family.

In terms of biological role, necessary for efficient RNA polymerase transcription elongation past template-encoded arresting sites. The arresting sites in DNA have the property of trapping a certain fraction of elongating RNA polymerases that pass through, resulting in locked ternary complexes. Cleavage of the nascent transcript by cleavage factors such as GreA or GreB allows the resumption of elongation from the new 3'terminus. GreA releases sequences of 2 to 3 nucleotides. The chain is Transcription elongation factor GreA from Magnetococcus marinus (strain ATCC BAA-1437 / JCM 17883 / MC-1).